A 297-amino-acid chain; its full sequence is Large ribosomal subunit protein uL24m (297 aa).

N-acetylserine is present on Ser2. The KOW domain occupies 63–96 (FIPGDRVVVMSGASKGNIAVIKSFDKRTNSFILD).

Belongs to the universal ribosomal protein uL24 family. Component of the mitochondrial large ribosomal subunit (mt-LSU). Mature yeast 74S mitochondrial ribosomes consist of a small (37S) and a large (54S) subunit. The 37S small subunit contains a 15S ribosomal RNA (15S mt-rRNA) and 34 different proteins. The 54S large subunit contains a 21S rRNA (21S mt-rRNA) and 46 different proteins. uL24m forms the wall of the exit tunnel.

The protein localises to the mitochondrion. Its function is as follows. Component of the mitochondrial ribosome (mitoribosome), a dedicated translation machinery responsible for the synthesis of mitochondrial genome-encoded proteins, including at least some of the essential transmembrane subunits of the mitochondrial respiratory chain. The mitoribosomes are attached to the mitochondrial inner membrane and translation products are cotranslationally integrated into the membrane. The chain is Large ribosomal subunit protein uL24m (MRPL40) from Saccharomyces cerevisiae (strain ATCC 204508 / S288c) (Baker's yeast).